A 606-amino-acid polypeptide reads, in one-letter code: Ubiquitin-like modifier-activating enzyme ATG7 (606 aa).

The GXGXXG motif signature appears at 316 to 321 (GSGTLG). Cysteine 488 (glycyl thioester intermediate) is an active-site residue. Residues 567 to 606 (ALDDYKCVEKLSGLSKVQEEAELALEEDFDFSEDDEFVTG) form a homodimerization region.

Belongs to the ATG7 family. In terms of assembly, homodimer. Interacts with ATG8 through a thioester bond between Cys-488 and the C-terminal Gly of ATG8 and with ATG12 through a thioester bond between Cys-488 and the C-terminal Gly of ATG12. Also interacts with ATG3.

It is found in the cytoplasm. The protein localises to the preautophagosomal structure. E1-like activating enzyme involved in the 2 ubiquitin-like systems required for cytoplasm to vacuole transport (Cvt) and autophagy. Activates ATG12 for its conjugation with ATG5 and ATG8 for its conjugation with phosphatidylethanolamine. Both systems are needed for the ATG8 association to Cvt vesicles and autophagosomes membranes. Autophagy is essential for maintenance of amino acid levels and protein synthesis under nitrogen starvation. Required for selective autophagic degradation of the nucleus (nucleophagy) as well as for mitophagy which contributes to regulate mitochondrial quantity and quality by eliminating the mitochondria to a basal level to fulfill cellular energy requirements and preventing excess ROS production. This Kluyveromyces marxianus (strain DMKU3-1042 / BCC 29191 / NBRC 104275) (Yeast) protein is Ubiquitin-like modifier-activating enzyme ATG7.